The sequence spans 53 residues: UPF0391 membrane protein gsr2640 (53 aa).

Helical transmembrane passes span 4-24 and 32-49; these read LLWL…GGVV and WFLI…FVTG.

Belongs to the UPF0391 family.

It localises to the cell membrane. The chain is UPF0391 membrane protein gsr2640 from Gloeobacter violaceus (strain ATCC 29082 / PCC 7421).